The sequence spans 210 residues: HTH-type transcriptional repressor FabR (210 aa).

One can recognise an HTH tetR-type domain in the interval 10–70 (KTRRSLVEAA…TMVDESGLML (61 aa)). Positions 33–52 (SLREVAREAGIAPTSFYRHF) form a DNA-binding region, H-T-H motif.

Homodimer.

The protein localises to the cytoplasm. Represses the transcription of fabB, involved in unsaturated fatty acid (UFA) biosynthesis. By controlling UFA production, FabR directly influences the physical properties of the membrane bilayer. The chain is HTH-type transcriptional repressor FabR from Klebsiella pneumoniae subsp. pneumoniae (strain ATCC 700721 / MGH 78578).